The sequence spans 1018 residues: Inner centromere protein pic1 (1018 aa).

Position 171 is a phosphoserine (serine 171). Disordered regions lie at residues 184–207 (VPLR…PKQK), 247–287 (RTKD…SSSP), 306–365 (AKES…PPEI), 522–556 (TRKS…LPPS), 570–756 (EPLH…TSKP), 781–813 (EPDS…EDRK), 848–867 (TKQN…SQSN), and 877–944 (HAPA…LPSW). Composition is skewed to polar residues over residues 189–199 (TSPSPSETADS) and 268–287 (PSTT…SSSP). Low complexity predominate over residues 309–320 (SLTSSTRLSTSY). Composition is skewed to polar residues over residues 329-339 (VAFSSETVTSS) and 522-554 (TRKS…SSLP). Basic and acidic residues-rich tracts occupy residues 570–580 (EPLHDDSRQNS) and 624–644 (RSSE…RELS). A compositionally biased stretch (polar residues) spans 645 to 664 (NNEFPSRQTKTVTSANSSNI). 2 stretches are compositionally biased toward basic and acidic residues: residues 665-679 (RDME…RSEP) and 692-702 (KPFEEKSEKPT). Composition is skewed to polar residues over residues 705-719 (RLVT…SWHS) and 784-808 (SVTS…TNSQ). Residues 890–902 (PSSKSPLLKTPKS) are compositionally biased toward low complexity.

It belongs to the INCENP family. As to quaternary structure, component of the CPC complex at least composed of ark1, bir1 and pic1.

It localises to the nucleus. The protein localises to the cytoplasm. The protein resides in the cytoskeleton. It is found in the spindle. Component of the chromosomal passenger complex (CPC), a complex that acts as a key regulator of mitosis. Has a role in sister chromatid cohesion and condensation. This chain is Inner centromere protein pic1 (pic1), found in Schizosaccharomyces pombe (strain 972 / ATCC 24843) (Fission yeast).